Reading from the N-terminus, the 535-residue chain is Cytochrome P450 monooxygenase atE (535 aa).

C455 contributes to the heme binding site.

The protein belongs to the cytochrome P450 family. Heme is required as a cofactor.

The catalysed reaction is 3-methylcatechol + AH2 + O2 = 3-methylbenzene-1,2,4-triol + A + H2O. The protein operates within secondary metabolite biosynthesis. Its function is as follows. Cytochrome P450 monooxygenase; part of the gene cluster that mediates the biosynthesis of terreic acid, a quinone epoxide inhibitor of Bruton's tyrosine kinase. The first step of the pathway is the synthesis of 6-methylsalicylic acid (6-MSA) by the 6-methylsalicylic acid synthase atX. In the biosynthesis of 6-MSA, atX utilizes one acetyl-CoA and three malonyl-CoAs as its substrates and catalyzes a series of programmed reactions including Claisen condensation, reduction, aldol cyclization, and the hydrolytic cleavage that yields 6-MSA. The 6-methylsalicylate 1-monooxygenase atA then catalyzes the decarboxylative hydroxylation of 6-MSA to 3-methylcatechol. The next step is the conversion of 3-methylcatechol to 3-methyl-1,2,4-benzenetriol by cytochrome P450 monooxygenase atE, which is enhanced by cytochrome P450 monooxygenase atG. Then, the epoxidase atD catalyzes the epoxidation and hydroxyl oxidation of 3-methyl-1,2,4-benzenetriol to terremutin. Lastly, GMC oxidoreductase atC oxidizes terremutin to terreic acid. This Aspergillus terreus (strain NIH 2624 / FGSC A1156) protein is Cytochrome P450 monooxygenase atE.